The sequence spans 525 residues: G-protein regulator 2 (525 aa).

The GoLoco domain maps to 424-445; it reads PVDMMDLIFSMSSRMDDQRTEL. The tract at residues 489 to 525 is disordered; it reads TMNRILKRSKKSKSSLDSTNSIQGDDTRSDDVTMTSK.

Interacts with gpr-1; gpr-1 forms a complex with lin-5 and GDP-bound goa-1.

Its subcellular location is the cytoplasm. It is found in the cell cortex. It localises to the cytoskeleton. The protein resides in the spindle. Functionally, in the 1-cell embryo, probably together with gpr-1, controls nuclear rotation and spindle elongation during mitosis. Complex of gpr-1 and gpr-2, in association with lin-5, activates G-protein signaling to affect mitotic spindle force. Polarity determinants (par genes) may regulate lin-5/gpr-1/gpr-2/goa-1 locally to create the asymmetric forces that drive spindle movement. This chain is G-protein regulator 2 (gpr-2), found in Caenorhabditis elegans.